The primary structure comprises 282 residues: B3 domain-containing protein At5g25475 (282 aa).

Positions tryptophan 20–asparagine 114 form a DNA-binding region, TF-B3. Positions proline 127–tyrosine 178 are disordered. Low complexity predominate over residues threonine 144 to glycine 159.

It is found in the nucleus. The chain is B3 domain-containing protein At5g25475 from Arabidopsis thaliana (Mouse-ear cress).